The chain runs to 66 residues: Large ribosomal subunit protein bL35 (66 aa).

2 stretches are compositionally biased toward basic residues: residues 1 to 26 (MPKMKTHKGAAKRFKKTGSGKLKRSH) and 38 to 48 (QKQKRKLRKSA). The tract at residues 1 to 48 (MPKMKTHKGAAKRFKKTGSGKLKRSHAFTSHLFANKSQKQKRKLRKSA) is disordered.

It belongs to the bacterial ribosomal protein bL35 family.

The chain is Large ribosomal subunit protein bL35 from Halalkalibacterium halodurans (strain ATCC BAA-125 / DSM 18197 / FERM 7344 / JCM 9153 / C-125) (Bacillus halodurans).